The following is a 339-amino-acid chain: Small ribosomal subunit biogenesis GTPase RsgA (339 aa).

The CP-type G domain occupies 111 to 271 (MRGLLKPVAA…LIDSPGIREF (161 aa)). Residues 159-162 (NKAD) and 213-221 (GQSGVGKSS) each bind GTP. Residues C295, C300, H302, and C308 each coordinate Zn(2+).

Belongs to the TRAFAC class YlqF/YawG GTPase family. RsgA subfamily. As to quaternary structure, monomer. Associates with 30S ribosomal subunit, binds 16S rRNA. Zn(2+) serves as cofactor.

Its subcellular location is the cytoplasm. Its function is as follows. One of several proteins that assist in the late maturation steps of the functional core of the 30S ribosomal subunit. Helps release RbfA from mature subunits. May play a role in the assembly of ribosomal proteins into the subunit. Circularly permuted GTPase that catalyzes slow GTP hydrolysis, GTPase activity is stimulated by the 30S ribosomal subunit. This chain is Small ribosomal subunit biogenesis GTPase RsgA, found in Pseudomonas aeruginosa (strain ATCC 15692 / DSM 22644 / CIP 104116 / JCM 14847 / LMG 12228 / 1C / PRS 101 / PAO1).